The chain runs to 878 residues: Alanine--tRNA ligase (878 aa).

Zn(2+) is bound by residues His564, His568, Cys665, and His669.

This sequence belongs to the class-II aminoacyl-tRNA synthetase family. Zn(2+) serves as cofactor.

The protein resides in the cytoplasm. It carries out the reaction tRNA(Ala) + L-alanine + ATP = L-alanyl-tRNA(Ala) + AMP + diphosphate. Its function is as follows. Catalyzes the attachment of alanine to tRNA(Ala) in a two-step reaction: alanine is first activated by ATP to form Ala-AMP and then transferred to the acceptor end of tRNA(Ala). Also edits incorrectly charged Ser-tRNA(Ala) and Gly-tRNA(Ala) via its editing domain. The chain is Alanine--tRNA ligase from Natranaerobius thermophilus (strain ATCC BAA-1301 / DSM 18059 / JW/NM-WN-LF).